Here is an 82-residue protein sequence, read N- to C-terminus: MTGFTIEGSSLKLLKPQEQGVVSRIDSSRGDFVAQKLRSMNITLGTRVTVEQRSPRFLLRVGADQVALSDPLQDAIYVRLSR.

The protein belongs to the FeoA family.

Functionally, might be involved in Fe(2+) ion uptake. The chain is Putative Fe(2+) transport protein A from Leptolyngbya boryana (Plectonema boryanum).